The primary structure comprises 143 residues: Hemoglobin subunit alpha (143 aa).

N-acetylserine is present on Ser2. Positions 2–143 (SLSDKDKAAV…LALALSEKYR (142 aa)) constitute a Globin domain. His60 is a binding site for O2. His89 serves as a coordination point for heme b.

It belongs to the globin family. In terms of assembly, heterotetramer of two alpha chains and two beta chains. Red blood cells.

In terms of biological role, involved in oxygen transport from gills to the various peripheral tissues. This is Hemoglobin subunit alpha (hba) from Cyprinus carpio (Common carp).